The following is a 590-amino-acid chain: Protein phosphatase PP2A regulatory subunit A (590 aa).

HEAT repeat units lie at residues 12 to 50 (PIAVLIDELKHDEITYRLNALERLSTIALALGPERTRDE), 89 to 127 (LLSPLENLAATEETVVRDKAVDSLNKVCICLSQEQLEQY), 206 to 244 (FIPLFNSLSNDDQDSVRLLSFDIMVSLAEVLKSDSEIRH), 246 to 284 (LLQPLRSFVSDSSWRTRYMVAANFVKLAKVVGPSLIKDE), 285 to 323 (LIKPFVLLMKDTEQEVRRAIATQIPGFCELLDKRIVLEE), 324 to 362 (IIPVIQELINDPAQHVRAALGMNIGALAPQLGKEKTTEY), 363 to 401 (LLPMFLELLKDENPEVRLNIISKLEVVNKVVGIELLSQS), 402 to 440 (LLPAIVTLAEDKQWRVRLAIIDYIPLLAQQLGVEFFNEK), 480 to 518 (IIPKFLAMRSHPNYLYRMTTIFAISEIAPALNAEVIEKQ), 519 to 551 (ILPTLEQLVNDPIPNIRFNVAKAFEVLKPVLAA), and 562 to 590 (IIPLLEQLTKDNDPDVQYFATQALEQTND).

Belongs to the phosphatase 2A regulatory subunit A family. In terms of assembly, PP2A exists in several trimeric forms, all of which consist of a core composed of a catalytic subunit associated with a 65 kDa (PR65) (Subunit A) and a 55 kDa (PR55) (Subunit B) regulatory subunit.

In terms of biological role, phosphatase 2A affects a variety of biological processes in the cell such as transcription, cell cycle progression and cellular morphogenesis, and provides an initial identification of critical substrates for this phosphatase. The regulatory subunit may direct the catalytic subunit to distinct, albeit overlapping, subsets of substrates. The polypeptide is Protein phosphatase PP2A regulatory subunit A (paa1) (Schizosaccharomyces pombe (strain 972 / ATCC 24843) (Fission yeast)).